A 162-amino-acid chain; its full sequence is Cytochrome c-type biogenesis protein CcmE (162 aa).

The Cytoplasmic segment spans residues 1–8 (MNPVRKKR). The chain crosses the membrane as a helical; Signal-anchor for type II membrane protein span at residues 9 to 29 (LIIVLAILVGVGAAVGLALSA). At 30–162 (LQQNINLFYT…GETSYNQEGK (133 aa)) the chain is on the periplasmic side. Heme contacts are provided by H124 and Y128. Basic and acidic residues predominate over residues 139–148 (DSGQLKHYEN). The tract at residues 139-162 (DSGQLKHYENGKAAGETSYNQEGK) is disordered.

This sequence belongs to the CcmE/CycJ family.

It localises to the cell inner membrane. Its function is as follows. Heme chaperone required for the biogenesis of c-type cytochromes. Transiently binds heme delivered by CcmC and transfers the heme to apo-cytochromes in a process facilitated by CcmF and CcmH. This is Cytochrome c-type biogenesis protein CcmE from Pseudomonas paraeruginosa (strain DSM 24068 / PA7) (Pseudomonas aeruginosa (strain PA7)).